A 1673-amino-acid polypeptide reads, in one-letter code: Glutamine and serine-rich protein 1 (1673 aa).

8 disordered regions span residues 265 to 322 (VIPS…SSQA), 411 to 543 (DQTR…KSYV), 872 to 892 (RHMS…LSIN), 923 to 961 (QDLP…PKEG), 1050 to 1081 (DENA…QYSS), 1149 to 1182 (VIRP…KAEE), 1216 to 1272 (LSAL…EQLA), and 1390 to 1476 (KSKV…PPPI). The segment covering 289–309 (SSKTPKSQSVVSPELTQSYTK) has biased composition (polar residues). 2 stretches are compositionally biased toward low complexity: residues 310-322 (SSQN…SSQA) and 411-458 (DQTR…PSDS). The span at 459 to 539 (YTSGQNQTLA…MQNSRTTADS (81 aa)) shows a compositional bias: polar residues. The span at 947 to 956 (NIKNPPNVNQ) shows a compositional bias: polar residues. The segment covering 1222-1233 (NSEKRLKTEGDK) has biased composition (basic and acidic residues). 2 stretches are compositionally biased toward polar residues: residues 1259-1272 (KPSQ…EQLA) and 1397-1411 (ARTT…SKVS). The span at 1435–1451 (TKAEPPPKKRKQWKEEF) shows a compositional bias: basic and acidic residues. Residues 1452 to 1462 (SSSQSDSSPDM) are compositionally biased toward low complexity.

It is found in the chromosome. Its function is as follows. Plays an essential role in the protection and maintenance of transcriptional and developmental programs. Protects many bivalent promoters and poised enhancers from hypermethylation, showing a marked preference for these regulatory elements over other types of promoters or enhancers. Mechanistically, cooperates with tet1 and binds to DNA in a common complex to inhibit the binding of dnmt3a/3b and therefore de novo methylation. The chain is Glutamine and serine-rich protein 1 (qser1) from Xenopus laevis (African clawed frog).